Here is a 512-residue protein sequence, read N- to C-terminus: ATP synthase subunit beta 2 (512 aa).

174-181 contacts ATP; sequence GGAGVGKT. Residues 479-494 are compositionally biased toward basic and acidic residues; the sequence is RRKEEAAREADARRDA. The segment at 479–512 is disordered; that stretch reads RRKEEAAREADARRDAAAGAASGSAGPQGAQHGR.

Belongs to the ATPase alpha/beta chains family. In terms of assembly, F-type ATPases have 2 components, CF(1) - the catalytic core - and CF(0) - the membrane proton channel. CF(1) has five subunits: alpha(3), beta(3), gamma(1), delta(1), epsilon(1). CF(0) has three main subunits: a(1), b(2) and c(9-12). The alpha and beta chains form an alternating ring which encloses part of the gamma chain. CF(1) is attached to CF(0) by a central stalk formed by the gamma and epsilon chains, while a peripheral stalk is formed by the delta and b chains.

It is found in the cell inner membrane. It catalyses the reaction ATP + H2O + 4 H(+)(in) = ADP + phosphate + 5 H(+)(out). In terms of biological role, produces ATP from ADP in the presence of a proton gradient across the membrane. The catalytic sites are hosted primarily by the beta subunits. The chain is ATP synthase subunit beta 2 from Burkholderia thailandensis (strain ATCC 700388 / DSM 13276 / CCUG 48851 / CIP 106301 / E264).